Here is a 479-residue protein sequence, read N- to C-terminus: GMP reductase (479 aa).

2 CBS domains span residues 96–153 and 154–212; these read VLDT…VRDI and AVTD…ATDS. NADP(+) is bound by residues 246-248 and 296-298; these read DTA and GVG. The active-site Thioimidate intermediate is the Cys-303.

This sequence belongs to the IMPDH/GMPR family. GuaB1 subfamily. Requires a monovalent cation as cofactor.

The enzyme catalyses IMP + NH4(+) + NADP(+) = GMP + NADPH + 2 H(+). It functions in the pathway purine metabolism; IMP biosynthesis via salvage pathway. Involved in the purine-salvage pathway. Catalyzes the NADPH-dependent conversion of GMP to IMP. The chain is GMP reductase from Mycobacterium bovis (strain ATCC BAA-935 / AF2122/97).